A 510-amino-acid chain; its full sequence is Probable cytosol aminopeptidase (510 aa).

Positions 272 and 277 each coordinate Mn(2+). Lys284 is an active-site residue. The Mn(2+) site is built by Asp296, Asp355, and Glu357. Arg359 is a catalytic residue.

This sequence belongs to the peptidase M17 family. It depends on Mn(2+) as a cofactor.

The protein localises to the cytoplasm. The catalysed reaction is Release of an N-terminal amino acid, Xaa-|-Yaa-, in which Xaa is preferably Leu, but may be other amino acids including Pro although not Arg or Lys, and Yaa may be Pro. Amino acid amides and methyl esters are also readily hydrolyzed, but rates on arylamides are exceedingly low.. It carries out the reaction Release of an N-terminal amino acid, preferentially leucine, but not glutamic or aspartic acids.. Presumably involved in the processing and regular turnover of intracellular proteins. Catalyzes the removal of unsubstituted N-terminal amino acids from various peptides. In Synechococcus sp. (strain JA-3-3Ab) (Cyanobacteria bacterium Yellowstone A-Prime), this protein is Probable cytosol aminopeptidase.